Reading from the N-terminus, the 501-residue chain is Lysine--tRNA ligase (501 aa).

Residues E402 and E409 each coordinate Mg(2+).

It belongs to the class-II aminoacyl-tRNA synthetase family. In terms of assembly, homodimer. Requires Mg(2+) as cofactor.

It localises to the cytoplasm. The enzyme catalyses tRNA(Lys) + L-lysine + ATP = L-lysyl-tRNA(Lys) + AMP + diphosphate. The chain is Lysine--tRNA ligase from Helicobacter pylori (strain Shi470).